The primary structure comprises 575 residues: V-type ATP synthase alpha chain (575 aa).

Residue 238-245 (GPFGAGKT) participates in ATP binding.

It belongs to the ATPase alpha/beta chains family.

The catalysed reaction is ATP + H2O + 4 H(+)(in) = ADP + phosphate + 5 H(+)(out). Produces ATP from ADP in the presence of a proton gradient across the membrane. The V-type alpha chain is a catalytic subunit. This is V-type ATP synthase alpha chain from Borreliella burgdorferi (strain ZS7) (Borrelia burgdorferi).